Reading from the N-terminus, the 319-residue chain is 4-diphosphocytidyl-2-C-methyl-D-erythritol kinase (319 aa).

Lysine 18 is an active-site residue. 103–113 contacts ATP; it reads PIGAGLAGGST. Aspartate 145 is an active-site residue.

The protein belongs to the GHMP kinase family. IspE subfamily.

The catalysed reaction is 4-CDP-2-C-methyl-D-erythritol + ATP = 4-CDP-2-C-methyl-D-erythritol 2-phosphate + ADP + H(+). It participates in isoprenoid biosynthesis; isopentenyl diphosphate biosynthesis via DXP pathway; isopentenyl diphosphate from 1-deoxy-D-xylulose 5-phosphate: step 3/6. Catalyzes the phosphorylation of the position 2 hydroxy group of 4-diphosphocytidyl-2C-methyl-D-erythritol. The sequence is that of 4-diphosphocytidyl-2-C-methyl-D-erythritol kinase from Prochlorococcus marinus (strain NATL2A).